Reading from the N-terminus, the 249-residue chain is 1-(5-phosphoribosyl)-5-[(5-phosphoribosylamino)methylideneamino] imidazole-4-carboxamide isomerase (249 aa).

The Proton acceptor role is filled by Asp8. The active-site Proton donor is the Asp131.

The protein belongs to the HisA/HisF family.

The protein localises to the cytoplasm. It carries out the reaction 1-(5-phospho-beta-D-ribosyl)-5-[(5-phospho-beta-D-ribosylamino)methylideneamino]imidazole-4-carboxamide = 5-[(5-phospho-1-deoxy-D-ribulos-1-ylimino)methylamino]-1-(5-phospho-beta-D-ribosyl)imidazole-4-carboxamide. It functions in the pathway amino-acid biosynthesis; L-histidine biosynthesis; L-histidine from 5-phospho-alpha-D-ribose 1-diphosphate: step 4/9. In Aromatoleum aromaticum (strain DSM 19018 / LMG 30748 / EbN1) (Azoarcus sp. (strain EbN1)), this protein is 1-(5-phosphoribosyl)-5-[(5-phosphoribosylamino)methylideneamino] imidazole-4-carboxamide isomerase.